Consider the following 170-residue polypeptide: Myosin regulatory light chain 11 (170 aa).

Position 2 is a n,N,N-trimethylalanine (alanine 2). Phosphoserine occurs at positions 16 and 17. Phosphothreonine occurs at positions 26 and 36. The region spanning 26–61 is the EF-hand 1 domain; it reads TQIQEFKEAFTVIDQNRDGIIDKEDLRDTFAAMGRL. The Ca(2+) site is built by aspartate 39, asparagine 41, aspartate 43, and aspartate 50. Serine 76 carries the phosphoserine modification. EF-hand domains are found at residues 96–131 and 132–167; these read DPED…QCDR and FSQE…GDAK. The residue at position 102 (threonine 102) is a Phosphothreonine.

As to quaternary structure, myosin is a hexamer of 2 heavy chains and 4 light chains. Post-translationally, n,N,N-trimethylalanine found in this myosin light chain would not have been detected in the N-terminal tryptic peptide in PubMed:863872 and PubMed:352892 because it would remain trimethylated and ninhydrin negative after hydrolysis.

Functionally, myosin regulatory subunit that plays an essential role to maintain muscle integrity during early development. Plays a role in muscle contraction. In Oryctolagus cuniculus (Rabbit), this protein is Myosin regulatory light chain 11 (MYL11).